We begin with the raw amino-acid sequence, 234 residues long: Large ribosomal subunit protein uL1 (234 aa).

Belongs to the universal ribosomal protein uL1 family. In terms of assembly, part of the 50S ribosomal subunit.

In terms of biological role, binds directly to 23S rRNA. The L1 stalk is quite mobile in the ribosome, and is involved in E site tRNA release. Its function is as follows. Protein L1 is also a translational repressor protein, it controls the translation of the L11 operon by binding to its mRNA. The chain is Large ribosomal subunit protein uL1 from Salmonella agona (strain SL483).